Consider the following 186-residue polypeptide: Lipid A palmitoyltransferase PagP (186 aa).

The N-terminal stretch at 1 to 25 (MNVSKYVAIFSFVFIQLISVGKVFA) is a signal peptide. Active-site residues include His58, Asp101, and Ser102.

This sequence belongs to the lipid A palmitoyltransferase family. Homodimer.

The protein resides in the cell outer membrane. The catalysed reaction is lipid A (E. coli) + a 1-hexadecanoyl-2-acyl-sn-glycero-3-phosphocholine = hepta-acyl lipid A (E. coli) + a 2-acyl-sn-glycero-3-phosphocholine. It catalyses the reaction lipid IIA + a 1-hexadecanoyl-2-acyl-sn-glycero-3-phosphocholine = lipid IIB + a 2-acyl-sn-glycero-3-phosphocholine. It carries out the reaction lipid IVA (E. coli) + a 1-hexadecanoyl-2-acyl-sn-glycero-3-phosphocholine = lipid IVB (E. coli) + a 2-acyl-sn-glycero-3-phosphocholine. Functionally, transfers a palmitate residue from the sn-1 position of a phospholipid to the N-linked hydroxymyristate on the proximal unit of lipid A or its precursors. This chain is Lipid A palmitoyltransferase PagP, found in Escherichia coli O157:H7.